Reading from the N-terminus, the 435-residue chain is Zinc metalloproteinase/disintegrin (435 aa).

A propeptide spanning residues 1-26 is cleaved from the precursor; the sequence is KMCGVTQNWESYESTKKASQLNLTPE. Q27 carries the post-translational modification Pyrrolidone carboxylic acid. In terms of domain architecture, Peptidase M12B spans 33–227; it reads RYIKLGIFVD…HNFQCILNAP (195 aa). The N-linked (GlcNAc...) asparagine glycan is linked to N115. Cystine bridges form between C144/C222, C184/C206, and C186/C189. Position 169 (H169) interacts with Zn(2+). Residue E170 is part of the active site. Positions 173 and 179 each coordinate Zn(2+). Positions 228-243 are excised as a propeptide; it reads LRTDTVSTPVSGNELL. The Disintegrin domain occupies 235-318; sequence TPVSGNELLE…DCPTDDFHRN (84 aa). Residues V237, N240, L242, E244, E247, and D250 each contribute to the Ca(2+) site. 6 disulfides stabilise this stretch: C249/C264, C251/C259, C258/C281, C272/C278, C277/C303, and C290/C310. The D/ECD-tripeptide motif lies at 296 to 298; that stretch reads ECD.

Belongs to the venom metalloproteinase (M12B) family. P-III subfamily. P-IIIb sub-subfamily. In terms of assembly, monomer. Zn(2+) serves as cofactor. Post-translationally, the N-terminus of the metalloproteinase is blocked. As to expression, expressed by the venom gland.

Its subcellular location is the secreted. Its activity is regulated as follows. Inhibited by EDTA. Its function is as follows. Cleaves the alpha chain of fibrinogen (FGA) preferentially and cleaves the beta chain (FGB) either on longer incubation or at high concentrations. Induces apoptosis of endothelial cells (prior to cell detachment). Disintegrin: inhibits platelet aggregation induced by ADP, thrombin, platelet-activating factor and collagen. Acts by inhibiting fibrinogen interaction with platelet receptors GPIIb/GPIIIa (ITGA2B/ITGB3). In Craspedocephalus gramineus (Bamboo pit viper), this protein is Zinc metalloproteinase/disintegrin.